The chain runs to 1666 residues: Latent-transforming growth factor beta-binding protein 4 (1666 aa).

The N-terminal stretch at 1–24 is a signal peptide; sequence MRRPGLGGPCPLLLLLLLPAATSA. The region spanning 148-180 is the EGF-like 1 domain; the sequence is ARVLCPLICHNGGVCVKPDRCLCPPDFAGKFCQ. Disulfide bonds link cysteine 152-cysteine 162, cysteine 156-cysteine 168, cysteine 170-cysteine 179, cysteine 288-cysteine 310, cysteine 297-cysteine 323, and cysteine 311-cysteine 326. Positions 286 to 338 constitute a TB 1 domain; it reads GYCFRELRGSECASPLPGLRTQEVCCRGEGLAWGVHDCHPCAEHLRNSNQVSG. The N-linked (GlcNAc...) asparagine glycan is linked to asparagine 351. Positions 356–396 constitute an EGF-like 2; calcium-binding domain; that stretch reads DVDECATGGRCQHGECANTRGGYTCVCPDGFLLDSSRSSCI. 7 disulfides stabilise this stretch: cysteine 360-cysteine 371, cysteine 366-cysteine 380, cysteine 382-cysteine 395, cysteine 408-cysteine 430, cysteine 417-cysteine 443, cysteine 431-cysteine 446, and cysteine 432-cysteine 458. The region spanning 406–458 is the TB 2 domain; the sequence is GPCYRVLHDGGCSLPILRNITKQICCCSRVGKAWGRGCQLCPPYGSEGFREIC. N-linked (GlcNAc...) asparagine glycosylation is present at asparagine 424. The segment at 473–590 is disordered; that stretch reads YNTRPLNQDP…EIPESGPSSS (118 aa). The segment covering 491-502 has biased composition (pro residues); sequence RVPPATPRPPTG. A compositionally biased stretch (basic and acidic residues) spans 521–561; sequence PRPRPEPRPRPESRPRPEPRPRPEPRPQPESQPRPESRPRP. Over residues 562–573 the composition is skewed to pro residues; the sequence is ESQPWPEFPLPS. Over residues 579–590 the composition is skewed to low complexity; it reads GPEIPESGPSSS. One can recognise an EGF-like 3 domain in the interval 588–629; it reads SSSMCQRNPQVCGPGRCVPRPSGYTCACDPGFRLGPQGTRCI. Disulfide bonds link cysteine 592-cysteine 604, cysteine 599-cysteine 613, cysteine 615-cysteine 628, cysteine 634-cysteine 646, cysteine 641-cysteine 655, cysteine 657-cysteine 670, cysteine 676-cysteine 688, cysteine 683-cysteine 697, cysteine 699-cysteine 712, cysteine 718-cysteine 730, cysteine 725-cysteine 739, cysteine 741-cysteine 750, cysteine 757-cysteine 769, cysteine 764-cysteine 778, cysteine 780-cysteine 793, cysteine 799-cysteine 811, cysteine 806-cysteine 820, cysteine 822-cysteine 835, cysteine 881-cysteine 893, cysteine 887-cysteine 902, cysteine 904-cysteine 918, cysteine 924-cysteine 936, cysteine 930-cysteine 945, cysteine 947-cysteine 960, cysteine 966-cysteine 977, cysteine 972-cysteine 986, cysteine 988-cysteine 1001, cysteine 1095-cysteine 1107, cysteine 1101-cysteine 1116, and cysteine 1118-cysteine 1131. Positions 630-671 constitute an EGF-like 4; calcium-binding domain; sequence DIDECRRVPTPCAPGRCENTPGSFRCVCGTGFQAGPRATECL. The 42-residue stretch at 672 to 713 folds into the EGF-like 5; calcium-binding domain; that stretch reads DVDECRRVPPPCDRGRCENTPGSFLCVCPAGYQAAPHGASCQ. The region spanning 714-751 is the EGF-like 6; calcium-binding domain; that stretch reads DVDECTQSPGLCGRGVCENLPGSFRCVCPAGFRGSACE. The EGF-like 7; calcium-binding domain maps to 753–794; sequence DVDECAQQPPPCGPGRCDNTAGSFHCACPAGFRSRGPGAPCQ. An EGF-like 8; calcium-binding domain is found at 795–836; sequence DVDECSRSPSPCAYGRCENTEGSFKCVCPTGFQPNAAGSECE. The 43-residue stretch at 877 to 919 folds into the EGF-like 9; calcium-binding domain; the sequence is DVDECSSGTPCGLHGQCTNTKGSFHCSCSTGYRAPSGQPGPCA. Residues 920–961 form the EGF-like 10; calcium-binding domain; the sequence is DINECLEGDFCFPHGECLNTDGSFTCTCAPGYRPGPRGASCL. The 41-residue stretch at 962-1002 folds into the EGF-like 11; calcium-binding domain; the sequence is DVDECSEEDLCQSGICTNTDGSFECICPPGHRAGPDLASCL. The 42-residue stretch at 1091-1132 folds into the EGF-like 12; calcium-binding domain; sequence DVDECRNRSFCGAHAMCQNLPGSFQCVCDQGYEGARDGRHCV. A glycan (N-linked (GlcNAc...) asparagine) is linked at asparagine 1097. A disordered region spans residues 1171–1221; that stretch reads TGRCVPPRAPAGTFPGSQPQAPASPSLPARPPAPPPPRRPSPPRQGPVSSG. Residues 1185-1197 show a composition bias toward low complexity; sequence PGSQPQAPASPSL. Residues 1198–1215 are compositionally biased toward pro residues; sequence PARPPAPPPPRRPSPPRQ. The region spanning 1223–1277 is the TB 3 domain; that stretch reads RECYFDTAAPDACDNILARNVTWQECCCTVGEGWGSGCRIQQCPGTETAEYQSLC. Disulfide bonds link cysteine 1225-cysteine 1248, cysteine 1235-cysteine 1260, cysteine 1249-cysteine 1265, cysteine 1250-cysteine 1277, cysteine 1299-cysteine 1312, cysteine 1307-cysteine 1321, cysteine 1323-cysteine 1336, cysteine 1342-cysteine 1354, cysteine 1349-cysteine 1363, and cysteine 1365-cysteine 1378. Asparagine 1242 is a glycosylation site (N-linked (GlcNAc...) asparagine). The EGF-like 13; calcium-binding domain occupies 1295–1337; sequence DVDECQLFQDQVCKSGVCVNTAPGYSCYCSNGFYYHAHRLECV. An EGF-like 14; calcium-binding domain is found at 1338–1379; sequence DNDECADEEPACEGGRCVNTVGSYHCTCEPPLVLDGSRRRCV. N-linked (GlcNAc...) asparagine glycosylation occurs at asparagine 1381. One can recognise a TB 4 domain in the interval 1391 to 1444; that stretch reads GVCWQEVGPDLVCSRPRLDRQATYTECCCLYGEAWGMDCALCPAQDSDDFEALC. 4 disulfides stabilise this stretch: cysteine 1393/cysteine 1417, cysteine 1403/cysteine 1429, cysteine 1418/cysteine 1432, and cysteine 1419/cysteine 1444. The span at 1488–1500 shows a compositional bias: pro residues; that stretch reads VLPYDPYPPPPGP. Residues 1488-1566 form a disordered region; that stretch reads VLPYDPYPPP…SSERGSYTGA (79 aa). The residue at position 1564 (threonine 1564) is a Phosphothreonine. 2 consecutive EGF-like domains span residues 1575-1615 and 1616-1660; these read EAEE…MSCV and DVNE…HHCA. Cystine bridges form between cysteine 1579-cysteine 1590, cysteine 1585-cysteine 1599, cysteine 1601-cysteine 1614, cysteine 1620-cysteine 1635, cysteine 1630-cysteine 1644, and cysteine 1646-cysteine 1659.

This sequence belongs to the LTBP family. In terms of assembly, forms part of the large latent transforming growth factor beta precursor complex; removal is essential for activation of complex. Interacts with LTBP1 and TGFB1. Interacts with EFEMP2; this interaction promotes fibrillar deposition of EFEMP2. Contains hydroxylated asparagine residues.

The protein resides in the secreted. It localises to the extracellular space. It is found in the extracellular matrix. Functionally, key regulator of transforming growth factor beta (TGFB1, TGFB2 and TGFB3) that controls TGF-beta activation by maintaining it in a latent state during storage in extracellular space. Associates specifically via disulfide bonds with the Latency-associated peptide (LAP), which is the regulatory chain of TGF-beta, and regulates integrin-dependent activation of TGF-beta. This Mus musculus (Mouse) protein is Latent-transforming growth factor beta-binding protein 4 (Ltbp4).